A 333-amino-acid chain; its full sequence is Antimicrobial peptides (333 aa).

Residues 1–23 (MVQKGVVFGVLLILFICSTLTSA) form the signal peptide. The disordered stretch occupies residues 23-52 (ADSKPNPTKEEEPAKKPDEVSVKSGGPEVS). Residues 24–54 (DSKPNPTKEEEPAKKPDEVSVKSGGPEVSED) constitute a propeptide, acidic peptide 1. The segment covering 29–43 (PTKEEEPAKKPDEVS) has biased composition (basic and acidic residues). Q55 carries the post-translational modification Pyrrolidone carboxylic acid. Cystine bridges form between C60–C70 and C61–C74. Residues 75–102 (ANAEEAAAAIPEASEELAQEEAPVYSED) constitute a propeptide, acidic peptide 2. Residue Q103 is modified to Pyrrolidone carboxylic acid. 2 disulfides stabilise this stretch: C108–C118 and C109–C122. Positions 123–148 (QNAEEAAAAIPEATEKAQEAPVYSED) are cleaved as a propeptide — acidic peptide 3. Position 149 is a pyrrolidone carboxylic acid (Q149). Disulfide bonds link C154/C164 and C155/C168. Residues 169-196 (QNAEEAAAAVAIPEASEKAQEGPVYSED) constitute a propeptide, acidic peptide 4. Q197 is modified (pyrrolidone carboxylic acid). Cystine bridges form between C202–C212 and C203–C216. A propeptide spans 217 to 232 (SNAADEVATPEDVEPG) (acidic peptide 5). The residue at position 233 (Q233) is a Pyrrolidone carboxylic acid. 2 disulfide bridges follow: C238-C248 and C239-C252. Positions 253–278 (HNAAEEATLKAFEEEAAREQPVYSED) are cleaved as a propeptide — acidic peptide 6. At Q279 the chain carries Pyrrolidone carboxylic acid. 2 disulfides stabilise this stretch: C284–C294 and C285–C298. The propeptide at 299-333 (QSAEEAAAFQAGEVTASLMLIMFKACPCMGPVPSV) is acidic peptide 7.

The N-terminal of all peptides are blocked. Post-translationally, the 4 cysteine residues of all peptides are involved in intrachain disulfide bonds.

The protein resides in the secreted. In terms of biological role, plays a role in the defense of the germinating seed against microorganisms, by inhibiting the growth of a range of filamentous fungi and bacteria, especially Gram-positive bacteria. Not cytotoxic for cultured human cells and are the smallest known plant-derived antimicrobial peptides. Peptide IB-AMP4 has a higher antifungal activity than IB-AMP1. The polypeptide is Antimicrobial peptides (AMP) (Impatiens balsamina (Balsam)).